A 183-amino-acid polypeptide reads, in one-letter code: Probable chemoreceptor glutamine deamidase CheD (183 aa).

This sequence belongs to the CheD family.

The enzyme catalyses L-glutaminyl-[protein] + H2O = L-glutamyl-[protein] + NH4(+). Its function is as follows. Probably deamidates glutamine residues to glutamate on methyl-accepting chemotaxis receptors (MCPs), playing an important role in chemotaxis. The polypeptide is Probable chemoreceptor glutamine deamidase CheD (Sinorhizobium medicae (strain WSM419) (Ensifer medicae)).